We begin with the raw amino-acid sequence, 1457 residues long: Receptor-type tyrosine-protein phosphatase kappa (1457 aa).

An N-terminal signal peptide occupies residues 1–25; the sequence is MDVAAAALPAFVALWLLYPWPLLGS. At 26–752 the chain is on the extracellular side; the sequence is ALGQFSAGGC…PAKQTDRVVK (727 aa). One can recognise an MAM domain in the interval 30 to 193; that stretch reads FSAGGCTFDD…IQVLSYPCDK (164 aa). Residues Asn-100, Asn-139, and Asn-210 are each glycosylated (N-linked (GlcNAc...) asparagine). The region spanning 195-280 is the Ig-like C2-type domain; it reads PHFLRLGDVE…TQSERGSGVS (86 aa). A disulfide bond links Cys-215 and Cys-269. Fibronectin type-III domains are found at residues 293–388, 391–487, 490–594, and 595–688; these read PIAP…CAEP, TPKT…TDED, GPVP…SAPS, and LPDY…TVGD. Residues Asn-415, Asn-423, Asn-435, Asn-461, Asn-551, Asn-585, Asn-589, Asn-606, and Asn-689 are each glycosylated (N-linked (GlcNAc...) asparagine). A helical transmembrane segment spans residues 753–774; sequence IAGISAGILVFILLLLVVIVIV. At 775 to 1457 the chain is on the cytoplasmic side; the sequence is KKSKLAKKRK…DVALEYLESS (683 aa). Ser-868 is modified (phosphoserine). Tyrosine-protein phosphatase domains follow at residues 899 to 1159 and 1191 to 1453; these read FKEE…ILEA and LKDE…ALEY. Residues Asp-1068, 1100 to 1106, and Gln-1144 each bind substrate; that span reads CSAGAGR. Cys-1100 acts as the Phosphocysteine intermediate in catalysis. Cys-1394 (phosphocysteine intermediate) is an active-site residue.

Belongs to the protein-tyrosine phosphatase family. Receptor class 2B subfamily. This protein undergoes proteolytic processing. As to expression, high levels in liver and kidney. Lower levels in lung, brain and heart. Not seen in spleen and testis.

The protein localises to the membrane. It carries out the reaction O-phospho-L-tyrosyl-[protein] + H2O = L-tyrosyl-[protein] + phosphate. In terms of biological role, regulation of processes involving cell contact and adhesion such as growth control, tumor invasion, and metastasis. Negative regulator of EGFR signaling pathway. Forms complexes with beta-catenin and gamma-catenin/plakoglobin. Beta-catenin may be a substrate for the catalytic activity of PTPRK/PTP-kappa. This Mus musculus (Mouse) protein is Receptor-type tyrosine-protein phosphatase kappa (Ptprk).